Reading from the N-terminus, the 301-residue chain is Ribosomal protein L11 methyltransferase (301 aa).

4 residues coordinate S-adenosyl-L-methionine: Thr-146, Gly-167, Asp-189, and Asn-234.

Belongs to the methyltransferase superfamily. PrmA family.

The protein localises to the cytoplasm. The enzyme catalyses L-lysyl-[protein] + 3 S-adenosyl-L-methionine = N(6),N(6),N(6)-trimethyl-L-lysyl-[protein] + 3 S-adenosyl-L-homocysteine + 3 H(+). Functionally, methylates ribosomal protein L11. The chain is Ribosomal protein L11 methyltransferase from Acinetobacter baumannii (strain SDF).